Reading from the N-terminus, the 963-residue chain is Protein translocase subunit SecA (963 aa).

Residues Gln-87, 105–109 (GEGKT), and Asp-524 each bind ATP. 4 residues coordinate Zn(2+): Cys-946, Cys-948, Cys-957, and His-958.

Belongs to the SecA family. As to quaternary structure, monomer and homodimer. Part of the essential Sec protein translocation apparatus which comprises SecA, SecYEG and auxiliary proteins SecDF-YajC and YidC. Zn(2+) is required as a cofactor.

The protein localises to the cell inner membrane. The protein resides in the cytoplasm. It carries out the reaction ATP + H2O + cellular proteinSide 1 = ADP + phosphate + cellular proteinSide 2.. Functionally, part of the Sec protein translocase complex. Interacts with the SecYEG preprotein conducting channel. Has a central role in coupling the hydrolysis of ATP to the transfer of proteins into and across the cell membrane, serving both as a receptor for the preprotein-SecB complex and as an ATP-driven molecular motor driving the stepwise translocation of polypeptide chains across the membrane. The protein is Protein translocase subunit SecA of Methylobacterium radiotolerans (strain ATCC 27329 / DSM 1819 / JCM 2831 / NBRC 15690 / NCIMB 10815 / 0-1).